The following is a 313-amino-acid chain: Coproporphyrin III ferrochelatase (313 aa).

The Fe(2+) site is built by histidine 191 and glutamate 270.

This sequence belongs to the ferrochelatase family.

It is found in the cytoplasm. It carries out the reaction Fe-coproporphyrin III + 2 H(+) = coproporphyrin III + Fe(2+). Its pathway is porphyrin-containing compound metabolism; protoheme biosynthesis. Functionally, involved in coproporphyrin-dependent heme b biosynthesis. Catalyzes the insertion of ferrous iron into coproporphyrin III to form Fe-coproporphyrin III. The protein is Coproporphyrin III ferrochelatase of Enterococcus faecalis (strain ATCC 700802 / V583).